The primary structure comprises 237 residues: UPF0053 inner membrane protein YgdQ (237 aa).

At 1–17 the chain is on the periplasmic side; sequence MLFAWITDPNAWLALGT. Residues 18-38 traverse the membrane as a helical segment; that stretch reads LTLLEIVLGIDNIIFLSLVVA. Residues 39-50 are Cytoplasmic-facing; that stretch reads KLPTAQRAHARR. A helical transmembrane segment spans residues 51 to 71; the sequence is LGLAGAMVMRLALLASIAWVT. The Periplasmic segment spans residues 72 to 79; the sequence is RLTNPLFT. A helical transmembrane segment spans residues 80 to 100; that stretch reads IFSQEISARDLILLLGGLFLI. Residues 101-124 lie on the Cytoplasmic side of the membrane; that stretch reads WKASKEIHESIEGEEEGLKTRVSS. Residues 125–145 traverse the membrane as a helical segment; the sequence is FLGAIVQIMLLDIIFSLDSVI. The Periplasmic portion of the chain corresponds to 146–151; the sequence is TAVGLS. Residues 152–172 form a helical membrane-spanning segment; that stretch reads DHLFIMMAAVVIAVGVMMFAA. The Cytoplasmic segment spans residues 173 to 186; that stretch reads RSIGDFVERHPSVK. The helical transmembrane segment at 187-207 threads the bilayer; the sequence is MLALSFLILVGFTLILESFDI. Residues 208–209 lie on the Periplasmic side of the membrane; that stretch reads HV. A helical transmembrane segment spans residues 210–230; that stretch reads PKGYIYFAMFFSIAVESLNLI. Over 231-237 the chain is Cytoplasmic; sequence RNKKNPL.

It belongs to the UPF0053 family.

It localises to the cell inner membrane. The sequence is that of UPF0053 inner membrane protein YgdQ (ygdQ) from Escherichia coli O157:H7.